The chain runs to 134 residues: Arsenate reductase (134 aa).

Residues Cys-11, Cys-83, and Cys-90 each act as nucleophile in the active site. Disulfide bonds link Cys-11-Cys-83 and Cys-83-Cys-90.

It belongs to the low molecular weight phosphotyrosine protein phosphatase family. Thioredoxin-coupled ArsC subfamily.

Its subcellular location is the cytoplasm. It catalyses the reaction arsenate + [thioredoxin]-dithiol + H(+) = arsenite + [thioredoxin]-disulfide + H2O. In terms of biological role, catalyzes the reduction of arsenate [As(V)] to arsenite [As(III)]. The polypeptide is Arsenate reductase (Brevibacillus brevis (strain 47 / JCM 6285 / NBRC 100599)).